We begin with the raw amino-acid sequence, 425 residues long: Serine--tRNA ligase (425 aa).

230–232 serves as a coordination point for L-serine; sequence TAE. 261–263 provides a ligand contact to ATP; that stretch reads RSE. E284 is a binding site for L-serine. 348–351 provides a ligand contact to ATP; that stretch reads EISS. S384 contacts L-serine.

Belongs to the class-II aminoacyl-tRNA synthetase family. Type-1 seryl-tRNA synthetase subfamily. As to quaternary structure, homodimer. The tRNA molecule binds across the dimer.

It localises to the cytoplasm. It catalyses the reaction tRNA(Ser) + L-serine + ATP = L-seryl-tRNA(Ser) + AMP + diphosphate + H(+). The catalysed reaction is tRNA(Sec) + L-serine + ATP = L-seryl-tRNA(Sec) + AMP + diphosphate + H(+). Its pathway is aminoacyl-tRNA biosynthesis; selenocysteinyl-tRNA(Sec) biosynthesis; L-seryl-tRNA(Sec) from L-serine and tRNA(Sec): step 1/1. Catalyzes the attachment of serine to tRNA(Ser). Is also able to aminoacylate tRNA(Sec) with serine, to form the misacylated tRNA L-seryl-tRNA(Sec), which will be further converted into selenocysteinyl-tRNA(Sec). This is Serine--tRNA ligase from Streptococcus pyogenes serotype M6 (strain ATCC BAA-946 / MGAS10394).